The sequence spans 365 residues: Cobalt-precorrin-5B C(1)-methyltransferase (365 aa).

The protein belongs to the CbiD family.

It catalyses the reaction Co-precorrin-5B + S-adenosyl-L-methionine = Co-precorrin-6A + S-adenosyl-L-homocysteine. It participates in cofactor biosynthesis; adenosylcobalamin biosynthesis; cob(II)yrinate a,c-diamide from sirohydrochlorin (anaerobic route): step 6/10. Its function is as follows. Catalyzes the methylation of C-1 in cobalt-precorrin-5B to form cobalt-precorrin-6A. This Variovorax paradoxus (strain S110) protein is Cobalt-precorrin-5B C(1)-methyltransferase.